The primary structure comprises 161 residues: Globin CTT-VIIB-6 (161 aa).

The N-terminal stretch at 1 to 16 (MKFFAVLALCIVGAIA) is a signal peptide. Residues 18–161 (PLTADEASLV…NTFAIVVPRL (144 aa)) enclose the Globin domain. Residues His-76 and His-111 each coordinate heme b.

It belongs to the globin family. In terms of assembly, homodimer.

The sequence is that of Globin CTT-VIIB-6 (CTT-7B6) from Chironomus thummi thummi (Midge).